A 258-amino-acid chain; its full sequence is Na(+)-translocating NADH-quinone reductase subunit C (258 aa).

A helical transmembrane segment spans residues 14–34 (LIVVLAVSLICSVIVAGAVVG). Residue Ser226 is modified to FMN phosphoryl serine.

The protein belongs to the NqrC family. As to quaternary structure, composed of six subunits; NqrA, NqrB, NqrC, NqrD, NqrE and NqrF. It depends on FMN as a cofactor.

The protein resides in the cell inner membrane. It catalyses the reaction a ubiquinone + n Na(+)(in) + NADH + H(+) = a ubiquinol + n Na(+)(out) + NAD(+). Functionally, NQR complex catalyzes the reduction of ubiquinone-1 to ubiquinol by two successive reactions, coupled with the transport of Na(+) ions from the cytoplasm to the periplasm. NqrA to NqrE are probably involved in the second step, the conversion of ubisemiquinone to ubiquinol. In Neisseria meningitidis serogroup B (strain ATCC BAA-335 / MC58), this protein is Na(+)-translocating NADH-quinone reductase subunit C.